Reading from the N-terminus, the 227-residue chain is ATP-dependent dethiobiotin synthetase BioD (227 aa).

13 to 18 serves as a coordination point for ATP; sequence NIGKTV. Position 17 (T17) interacts with Mg(2+). K38 is an active-site residue. Residues D55 and 116–119 each bind ATP; that span reads EGIG. Mg(2+)-binding residues include D55 and E116.

Belongs to the dethiobiotin synthetase family. In terms of assembly, homodimer. Mg(2+) serves as cofactor.

It is found in the cytoplasm. The catalysed reaction is (7R,8S)-7,8-diammoniononanoate + CO2 + ATP = (4R,5S)-dethiobiotin + ADP + phosphate + 3 H(+). The protein operates within cofactor biosynthesis; biotin biosynthesis; biotin from 7,8-diaminononanoate: step 1/2. In terms of biological role, catalyzes a mechanistically unusual reaction, the ATP-dependent insertion of CO2 between the N7 and N8 nitrogen atoms of 7,8-diaminopelargonic acid (DAPA, also called 7,8-diammoniononanoate) to form a ureido ring. This chain is ATP-dependent dethiobiotin synthetase BioD, found in Buchnera aphidicola subsp. Baizongia pistaciae (strain Bp).